Consider the following 729-residue polypeptide: Fatty acid oxidation complex subunit alpha (729 aa).

The segment at 1 to 189 (MLYKGDTLYL…KIGLVDGVVK (189 aa)) is enoyl-CoA hydratase/isomerase. Asp296 contributes to the substrate binding site. The segment at 311 to 729 (ETPKQAAVLG…ARPVGSLKTA (419 aa)) is 3-hydroxyacyl-CoA dehydrogenase. Residues Met324, Asp343, 400–402 (VVE), Lys407, and Ser429 each bind NAD(+). Catalysis depends on His450, which acts as the For 3-hydroxyacyl-CoA dehydrogenase activity. Asn453 lines the NAD(+) pocket. Residues Asn500 and Tyr660 each coordinate substrate. The disordered stretch occupies residues 708 to 729 (RHNEPYYPPVEPARPVGSLKTA).

It in the N-terminal section; belongs to the enoyl-CoA hydratase/isomerase family. In the C-terminal section; belongs to the 3-hydroxyacyl-CoA dehydrogenase family. Heterotetramer of two alpha chains (FadB) and two beta chains (FadA).

It carries out the reaction a (3S)-3-hydroxyacyl-CoA + NAD(+) = a 3-oxoacyl-CoA + NADH + H(+). It catalyses the reaction a (3S)-3-hydroxyacyl-CoA = a (2E)-enoyl-CoA + H2O. The catalysed reaction is a 4-saturated-(3S)-3-hydroxyacyl-CoA = a (3E)-enoyl-CoA + H2O. The enzyme catalyses (3S)-3-hydroxybutanoyl-CoA = (3R)-3-hydroxybutanoyl-CoA. It carries out the reaction a (3Z)-enoyl-CoA = a 4-saturated (2E)-enoyl-CoA. It catalyses the reaction a (3E)-enoyl-CoA = a 4-saturated (2E)-enoyl-CoA. The protein operates within lipid metabolism; fatty acid beta-oxidation. Its function is as follows. Involved in the aerobic and anaerobic degradation of long-chain fatty acids via beta-oxidation cycle. Catalyzes the formation of 3-oxoacyl-CoA from enoyl-CoA via L-3-hydroxyacyl-CoA. It can also use D-3-hydroxyacyl-CoA and cis-3-enoyl-CoA as substrate. This is Fatty acid oxidation complex subunit alpha from Salmonella schwarzengrund (strain CVM19633).